We begin with the raw amino-acid sequence, 342 residues long: Holliday junction branch migration complex subunit RuvB (342 aa).

Positions 1–184 (MEEDFNIRDH…FGINLHLEYY (184 aa)) are large ATPase domain (RuvB-L). ATP is bound by residues Leu-23, Arg-24, Gly-65, Lys-68, Thr-69, Thr-70, 131–133 (EDY), Arg-174, Tyr-184, and Arg-221. Thr-69 lines the Mg(2+) pocket. The segment at 185-255 (DDDILSNIIS…IANYALEALN (71 aa)) is small ATPAse domain (RuvB-S). The segment at 258–342 (KYGLDEIDNK…YNSQKTLFND (85 aa)) is head domain (RuvB-H). Residues Arg-313 and Arg-318 each coordinate DNA.

The protein belongs to the RuvB family. As to quaternary structure, homohexamer. Forms an RuvA(8)-RuvB(12)-Holliday junction (HJ) complex. HJ DNA is sandwiched between 2 RuvA tetramers; dsDNA enters through RuvA and exits via RuvB. An RuvB hexamer assembles on each DNA strand where it exits the tetramer. Each RuvB hexamer is contacted by two RuvA subunits (via domain III) on 2 adjacent RuvB subunits; this complex drives branch migration. In the full resolvosome a probable DNA-RuvA(4)-RuvB(12)-RuvC(2) complex forms which resolves the HJ.

The protein resides in the cytoplasm. The enzyme catalyses ATP + H2O = ADP + phosphate + H(+). Functionally, the RuvA-RuvB-RuvC complex processes Holliday junction (HJ) DNA during genetic recombination and DNA repair, while the RuvA-RuvB complex plays an important role in the rescue of blocked DNA replication forks via replication fork reversal (RFR). RuvA specifically binds to HJ cruciform DNA, conferring on it an open structure. The RuvB hexamer acts as an ATP-dependent pump, pulling dsDNA into and through the RuvAB complex. RuvB forms 2 homohexamers on either side of HJ DNA bound by 1 or 2 RuvA tetramers; 4 subunits per hexamer contact DNA at a time. Coordinated motions by a converter formed by DNA-disengaged RuvB subunits stimulates ATP hydrolysis and nucleotide exchange. Immobilization of the converter enables RuvB to convert the ATP-contained energy into a lever motion, pulling 2 nucleotides of DNA out of the RuvA tetramer per ATP hydrolyzed, thus driving DNA branch migration. The RuvB motors rotate together with the DNA substrate, which together with the progressing nucleotide cycle form the mechanistic basis for DNA recombination by continuous HJ branch migration. Branch migration allows RuvC to scan DNA until it finds its consensus sequence, where it cleaves and resolves cruciform DNA. The polypeptide is Holliday junction branch migration complex subunit RuvB (Bacteroides fragilis (strain ATCC 25285 / DSM 2151 / CCUG 4856 / JCM 11019 / LMG 10263 / NCTC 9343 / Onslow / VPI 2553 / EN-2)).